Consider the following 832-residue polypeptide: Receptor-interacting serine/threonine-protein kinase 4 (832 aa).

The 265-residue stretch at 22–286 folds into the Protein kinase domain; sequence FTGWEKVGSG…QGNGLNGELI (265 aa). ATP is bound by residues 28 to 36 and Lys51; that span reads VGSGGFGQV. A Glycyl lysine isopeptide (Lys-Gly) (interchain with G-Cter in ubiquitin) cross-link involves residue Lys51. Asp143 functions as the Proton acceptor in the catalytic mechanism. A Glycyl lysine isopeptide (Lys-Gly) (interchain with G-Cter in ubiquitin) cross-link involves residue Lys145. Disordered stretches follow at residues 325 to 368 and 389 to 424; these read QEIT…RLKR and SGVS…GVSS. Positions 329 to 342 are enriched in acidic residues; it reads SETEDLCEKPDDEV. Residues 343 to 359 show a composition bias toward basic and acidic residues; that stretch reads KETAHDLDVKSPPEPRS. Positions 403–424 are enriched in low complexity; sequence RSSSESKLPSSGSGKRLSGVSS. 10 ANK repeats span residues 485–514, 518–547, 551–580, 584–613, 617–647, 651–680, 684–713, 717–746, 750–780, and 782–811; these read SGAS…NPNL, RGST…SVNA, DQWT…SVNE, EGRT…DVSL, DAWL…SVNA, DGRT…DVNV, LAQT…GKEA, DGYT…DVLA, LNQT…DLFD, and QGLS…HINL.

The protein belongs to the protein kinase superfamily. TKL Ser/Thr protein kinase family. Interacts with PRKCB. Interacts with TRAF1, TRAF2, TRAF3 and TRAF5. Interacts with BIRC2/c-IAP1, BIRC3/c-IAP2 and XIAP/BIRC4. May be phosphorylated by MAP3K2 and MAP3K3. In terms of processing, proteolytically cleaved by during Fas-induced apoptosis. Cleavage at Asp-388 and Asp-426. Post-translationally, polyubiquitinated with 'Lys-48' and 'Lys-63'-linked chains by BIRC2/c-IAP1 and BIRC3/c-IAP2, leading to activation of NF-kappa-B. In terms of tissue distribution, expressed in hair follicles and skin.

The protein resides in the cytoplasm. Its subcellular location is the membrane. The enzyme catalyses L-seryl-[protein] + ATP = O-phospho-L-seryl-[protein] + ADP + H(+). It carries out the reaction L-threonyl-[protein] + ATP = O-phospho-L-threonyl-[protein] + ADP + H(+). Functionally, serine/threonine protein kinase. Required for embryonic skin development and correct skin homeostasis in adults, via phosphorylation of PKP1 and subsequent promotion of keratinocyte differentiation and cell adhesion. It is a direct transcriptional target of TP63. Plays a role in NF-kappa-B activation. This chain is Receptor-interacting serine/threonine-protein kinase 4 (RIPK4), found in Homo sapiens (Human).